We begin with the raw amino-acid sequence, 140 residues long: Anti-sigma F factor (140 aa).

It belongs to the anti-sigma-factor family.

The catalysed reaction is L-seryl-[protein] + ATP = O-phospho-L-seryl-[protein] + ADP + H(+). It carries out the reaction L-threonyl-[protein] + ATP = O-phospho-L-threonyl-[protein] + ADP + H(+). Its function is as follows. Binds to sigma F and blocks its ability to form an RNA polymerase holoenzyme (E-sigma F). Phosphorylates SpoIIAA on a serine residue. This phosphorylation may enable SpoIIAA to act as an anti-anti-sigma factor that counteracts SpoIIAB and thus releases sigma F from inhibition. This is Anti-sigma F factor from Clostridium perfringens (strain SM101 / Type A).